A 357-amino-acid polypeptide reads, in one-letter code: Heat-inducible transcription repressor HrcA (357 aa).

The protein belongs to the HrcA family.

Functionally, negative regulator of class I heat shock genes (grpE-dnaK-dnaJ and groELS operons). Prevents heat-shock induction of these operons. This is Heat-inducible transcription repressor HrcA from Chlorobium luteolum (strain DSM 273 / BCRC 81028 / 2530) (Pelodictyon luteolum).